The sequence spans 284 residues: Bifunctional protein FolD (284 aa).

NADP(+) is bound by residues 164 to 166 (GTS) and Ile-230.

Belongs to the tetrahydrofolate dehydrogenase/cyclohydrolase family. In terms of assembly, homodimer.

It carries out the reaction (6R)-5,10-methylene-5,6,7,8-tetrahydrofolate + NADP(+) = (6R)-5,10-methenyltetrahydrofolate + NADPH. It catalyses the reaction (6R)-5,10-methenyltetrahydrofolate + H2O = (6R)-10-formyltetrahydrofolate + H(+). It functions in the pathway one-carbon metabolism; tetrahydrofolate interconversion. Catalyzes the oxidation of 5,10-methylenetetrahydrofolate to 5,10-methenyltetrahydrofolate and then the hydrolysis of 5,10-methenyltetrahydrofolate to 10-formyltetrahydrofolate. The polypeptide is Bifunctional protein FolD (Mycoplasma capricolum subsp. capricolum (strain California kid / ATCC 27343 / NCTC 10154)).